Consider the following 835-residue polypeptide: Protein translocase subunit SecA (835 aa).

Residues Gln85, 103 to 107, and Asp492 each bind ATP; that span reads GEGKT. The disordered stretch occupies residues 788–807; it reads VQGEAVHPSSDGEEAKKKPV. The Zn(2+) site is built by Cys819, Cys821, Cys830, and Cys831.

Belongs to the SecA family. As to quaternary structure, monomer and homodimer. Part of the essential Sec protein translocation apparatus which comprises SecA, SecYEG and auxiliary proteins SecDF. Other proteins may also be involved. Zn(2+) is required as a cofactor.

It is found in the cell membrane. The protein localises to the cytoplasm. It carries out the reaction ATP + H2O + cellular proteinSide 1 = ADP + phosphate + cellular proteinSide 2.. Functionally, part of the Sec protein translocase complex. Interacts with the SecYEG preprotein conducting channel. Has a central role in coupling the hydrolysis of ATP to the transfer of proteins into and across the cell membrane, serving as an ATP-driven molecular motor driving the stepwise translocation of polypeptide chains across the membrane. The polypeptide is Protein translocase subunit SecA (Bacillus cereus (strain ATCC 14579 / DSM 31 / CCUG 7414 / JCM 2152 / NBRC 15305 / NCIMB 9373 / NCTC 2599 / NRRL B-3711)).